The sequence spans 780 residues: Reticulon-1 (780 aa).

Disordered stretches follow at residues Met1–Glu76, Gln128–Thr176, Arg201–Lys223, and Met293–Pro576. A phosphoserine mark is found at Ser13 and Ser70. A Phosphoserine modification is found at Ser327. Residues Pro328 to Ser341 show a composition bias toward low complexity. Residues Ser350, Ser352, and Ser487 each carry the phosphoserine modification. The span at Ala497–Pro512 shows a compositional bias: basic and acidic residues. The region spanning Ala593–Glu780 is the Reticulon domain. Transmembrane regions (helical) follow at residues Ile607–Val627 and Phe709–Leu729.

In terms of assembly, interacts with NDRG1. Interacts with BACE1. Interacts with TMEM33.

It is found in the endoplasmic reticulum membrane. The protein resides in the golgi apparatus membrane. In terms of biological role, inhibits amyloid precursor protein processing, probably by blocking BACE1 activity. The sequence is that of Reticulon-1 (Rtn1) from Mus musculus (Mouse).